We begin with the raw amino-acid sequence, 1401 residues long: DNA-directed RNA polymerase subunit beta' (1401 aa).

Residues Cys-70, Cys-72, Cys-85, and Cys-88 each contribute to the Zn(2+) site. Mg(2+) contacts are provided by Asp-460, Asp-462, and Asp-464. 4 residues coordinate Zn(2+): Cys-814, Cys-888, Cys-895, and Cys-898. The segment at 1369 to 1388 (RQKQKAVEQEGPSAEQATDN) is disordered.

The protein belongs to the RNA polymerase beta' chain family. In terms of assembly, the RNAP catalytic core consists of 2 alpha, 1 beta, 1 beta' and 1 omega subunit. When a sigma factor is associated with the core the holoenzyme is formed, which can initiate transcription. Requires Mg(2+) as cofactor. Zn(2+) serves as cofactor.

It carries out the reaction RNA(n) + a ribonucleoside 5'-triphosphate = RNA(n+1) + diphosphate. DNA-dependent RNA polymerase catalyzes the transcription of DNA into RNA using the four ribonucleoside triphosphates as substrates. The chain is DNA-directed RNA polymerase subunit beta' from Aliivibrio fischeri (strain ATCC 700601 / ES114) (Vibrio fischeri).